Reading from the N-terminus, the 376-residue chain is MSNKSVLLIAGEPSGDLLGAHLAQSLKSLEPNLKLAGMGGKRMREAGVEVFINADKLAVVGLLEILRQFRDIRHAMQTLKRYFKKTPPDLVVFIDYPGFNLHMAKQAKKAGIKVLYYVSPQIWAWRYGRIKKIKKYVDHMAVLFDFEEKLYQKENVPVSFVGHPLANAPTPSLSRNEICKQFNLDLDKPIVALFPGSREQEINKLLPMMVQAGKLIQTQIPTVQFILPLALNLALDKIRPFLSPEIKVIQNDISHVLAIAHAAVAASGTVTLEIALQQVPLVIIYKVAPLTFWLGKKLIRLSFIGLCNLVSPEPVAVELLQQDATPQAIADEVFQLLNNHNYRQSIIGKLGHLRPQLDRGNAAQNVAKVVHNLIFS.

Belongs to the LpxB family.

It carries out the reaction a lipid X + a UDP-2-N,3-O-bis[(3R)-3-hydroxyacyl]-alpha-D-glucosamine = a lipid A disaccharide + UDP + H(+). It functions in the pathway bacterial outer membrane biogenesis; LPS lipid A biosynthesis. Its function is as follows. Condensation of UDP-2,3-diacylglucosamine and 2,3-diacylglucosamine-1-phosphate to form lipid A disaccharide, a precursor of lipid A, a phosphorylated glycolipid that anchors the lipopolysaccharide to the outer membrane of the cell. The protein is Lipid-A-disaccharide synthase of Coxiella burnetii (strain CbuK_Q154) (Coxiella burnetii (strain Q154)).